A 584-amino-acid polypeptide reads, in one-letter code: MSREAFDVPNIGTNKFLKVTPNLFTPERLNLFDDVELYLTLIKASKCVEQGERLHNISWRILNKAVLKEHNINRSKKRDGVKNIYYVLNPNNKQPIKPKQAAVKQPPLQKANLPPTTAKQNVLTRPMTSPAIAQGAHDRSLDNPNSTNNDVKNDVAPNRQFSKSTTSGLFSNFADKYQKMKNVNHVANKEEPQTIITGFDTSTVITKKPLQSRRSRSPFQHIGDMNMNCIDNETSKSTSPTLENMGSRKSSFPQKESLFGRPRSYKNDQNGQLSLSKTSSRKGKNKIFFSSEDEDSDWDSVSNDSEFYADEDDEEYDDYNEEEADQYYRRQWDKLLFAKNQQNLDSTKSSVSSANTINSNTSHDPVRKSLLSGLFLSEANSNSNNHNTAHSEYASKHVSPTPQSSHSNIGPQPQQNPPSANGIKQQKPSLKTSNVTALASLSPPQPSNNERLSMDIQKDFKTDNESNHLYESNAPLTAQTILPTALSTHMFLPNNIHQQRMAIATGSNTRHRFSRRQSMDIPSKNRNTGFLKTRMEISEEEKMVRTISRLDNTSIANSNGNGNDDTSNQRTEALGRKTSNGGRI.

Thr25 is modified (phosphothreonine). Disordered regions lie at residues 95 to 167 (PIKP…STTS), 209 to 279 (PLQS…SKTS), 291 to 320 (SEDEDSDWDSVSNDSEFYADEDDEEYDDYN), 343 to 366 (NLDSTKSSVSSANTINSNTSHDPV), and 381 to 432 (SNSN…SLKT). 3 stretches are compositionally biased toward polar residues: residues 114–127 (PPTTAKQNVLTRPM), 229–254 (CIDNETSKSTSPTLENMGSRKSSFPQ), and 267–278 (NDQNGQLSLSKT). 2 positions are modified to phosphoserine: Ser247 and Ser276. Residues 307–320 (FYADEDDEEYDDYN) are compositionally biased toward acidic residues. The segment covering 343 to 363 (NLDSTKSSVSSANTINSNTSH) has biased composition (polar residues). A compositionally biased stretch (low complexity) spans 381–392 (SNSNNHNTAHSE). A compositionally biased stretch (polar residues) spans 398–432 (VSPTPQSSHSNIGPQPQQNPPSANGIKQQKPSLKT). Ser442 carries the post-translational modification Phosphoserine. Ser518 is subject to Phosphoserine; by PKA. Positions 551 to 584 (DNTSIANSNGNGNDDTSNQRTEALGRKTSNGGRI) are disordered. A compositionally biased stretch (low complexity) spans 557 to 568 (NSNGNGNDDTSN).

Its subcellular location is the nucleus. Its function is as follows. Negative regulator of Ras-cAMP pathway. Involved in transcriptional regulation of galactose-inducible genes. This Saccharomyces cerevisiae (strain ATCC 204508 / S288c) (Baker's yeast) protein is Negative regulator of RAS-cAMP pathway (MKS1).